Reading from the N-terminus, the 358-residue chain is Acetylxylan esterase / glucomannan deacetylase (358 aa).

The signal sequence occupies residues 1–18 (MKLLFPILLLTGSYFLSA). Residue Cys-19 is the site of N-palmitoyl cysteine attachment. A lipid anchor (S-diacylglycerol cysteine) is attached at Cys-19. Ser-160 functions as the Nucleophile in the catalytic mechanism. Active-site charge relay system residues include Asp-333 and His-335.

The protein belongs to the carbohydrate esterase 2 (CE2) family.

The protein localises to the cell membrane. The catalysed reaction is Deacetylation of xylans and xylo-oligosaccharides.. It functions in the pathway glycan degradation; xylan degradation. Its function is as follows. Involved in the degradation of plant cell wall polysaccharides. Catalyzes the deacetylation of acetylated birchwood xylan and glucomannan, with equal efficiency, and of the synthetic substrate 4-nitrophenyl acetate (4-NPAc). Does not bind cellulose, cellohexaose and beta-glucan. In Cellvibrio japonicus (strain Ueda107) (Pseudomonas fluorescens subsp. cellulosa), this protein is Acetylxylan esterase / glucomannan deacetylase.